Here is a 230-residue protein sequence, read N- to C-terminus: Inactive 2-(S)-hydroxypropyl-CoM dehydrogenase 2 (230 aa).

Belongs to the short-chain dehydrogenases/reductases (SDR) family.

The protein is Inactive 2-(S)-hydroxypropyl-CoM dehydrogenase 2 of Xanthobacter autotrophicus (strain ATCC BAA-1158 / Py2).